Reading from the N-terminus, the 156-residue chain is Small ribosomal subunit protein uS7 (156 aa).

Belongs to the universal ribosomal protein uS7 family. In terms of assembly, part of the 30S ribosomal subunit. Contacts proteins S9 and S11.

In terms of biological role, one of the primary rRNA binding proteins, it binds directly to 16S rRNA where it nucleates assembly of the head domain of the 30S subunit. Is located at the subunit interface close to the decoding center, probably blocks exit of the E-site tRNA. This is Small ribosomal subunit protein uS7 from Deinococcus radiodurans (strain ATCC 13939 / DSM 20539 / JCM 16871 / CCUG 27074 / LMG 4051 / NBRC 15346 / NCIMB 9279 / VKM B-1422 / R1).